The sequence spans 957 residues: Glycine dehydrogenase (decarboxylating) 2 (957 aa).

Position 707 is an N6-(pyridoxal phosphate)lysine (Lys-707).

It belongs to the GcvP family. The glycine cleavage system is composed of four proteins: P, T, L and H. Pyridoxal 5'-phosphate is required as a cofactor.

It carries out the reaction N(6)-[(R)-lipoyl]-L-lysyl-[glycine-cleavage complex H protein] + glycine + H(+) = N(6)-[(R)-S(8)-aminomethyldihydrolipoyl]-L-lysyl-[glycine-cleavage complex H protein] + CO2. The glycine cleavage system catalyzes the degradation of glycine. The P protein binds the alpha-amino group of glycine through its pyridoxal phosphate cofactor; CO(2) is released and the remaining methylamine moiety is then transferred to the lipoamide cofactor of the H protein. The sequence is that of Glycine dehydrogenase (decarboxylating) 2 from Pseudomonas fluorescens (strain ATCC BAA-477 / NRRL B-23932 / Pf-5).